Reading from the N-terminus, the 177-residue chain is Large ribosomal subunit protein uL6 (177 aa).

Belongs to the universal ribosomal protein uL6 family. In terms of assembly, part of the 50S ribosomal subunit.

Functionally, this protein binds to the 23S rRNA, and is important in its secondary structure. It is located near the subunit interface in the base of the L7/L12 stalk, and near the tRNA binding site of the peptidyltransferase center. This is Large ribosomal subunit protein uL6 from Alteromonas mediterranea (strain DSM 17117 / CIP 110805 / LMG 28347 / Deep ecotype).